The primary structure comprises 710 residues: Effector protein AvrPphD (710 aa).

Polar residues predominate over residues 1-15 (MNPLRSIQHNITTPP). 3 disordered regions span residues 1-36 (MNPLRSIQHNITTPPISGGQPLDAVGPQAQQSHPKR), 136-155 (ISFDVPSPPPAHGSASSVLS), and 173-207 (SSSLETPLVSSPDHSRPPSQPKPVHIGSVRRDSGS).

Its subcellular location is the secreted. In terms of biological role, effector protein involved in non-host recognition and able to elicit hypersensitive response (HR). The chain is Effector protein AvrPphD (avrPphD) from Pseudomonas savastanoi pv. phaseolicola (Pseudomonas syringae pv. phaseolicola).